The following is a 147-amino-acid chain: Small ribosomal subunit protein eS10B (147 aa).

A disordered region spans residues 90–147; sequence THKRQVRPAAPRAGRPEPRERSSAADAGYRRAEKKDDGAAPGGFAPSFRGGFGRPVAA. Residues 103-127 are compositionally biased toward basic and acidic residues; the sequence is GRPEPRERSSAADAGYRRAEKKDDG.

The protein belongs to the eukaryotic ribosomal protein eS10 family. In terms of assembly, component of the small ribosomal subunit (SSU). Mature yeast ribosomes consist of a small (40S) and a large (60S) subunit. The 40S small subunit contains 1 molecule of ribosomal RNA (18S rRNA) and at least 33 different proteins. The large 60S subunit contains 3 rRNA molecules (25S, 5.8S and 5S rRNA) and at least 46 different proteins. eS10 interacts with GCN1 (via middle region); this interaction is direct and promotes GCN2 kinase activity.

It is found in the cytoplasm. In terms of biological role, component of the ribosome, a large ribonucleoprotein complex responsible for the synthesis of proteins in the cell. The small ribosomal subunit (SSU) binds messenger RNAs (mRNAs) and translates the encoded message by selecting cognate aminoacyl-transfer RNA (tRNA) molecules. The large subunit (LSU) contains the ribosomal catalytic site termed the peptidyl transferase center (PTC), which catalyzes the formation of peptide bonds, thereby polymerizing the amino acids delivered by tRNAs into a polypeptide chain. The nascent polypeptides leave the ribosome through a tunnel in the LSU and interact with protein factors that function in enzymatic processing, targeting, and the membrane insertion of nascent chains at the exit of the ribosomal tunnel. eS10 plays a role as a positive regulator of the GCN2 kinase activity by stimulating GCN1-mediated GCN2 activation. The chain is Small ribosomal subunit protein eS10B (rps1002) from Schizosaccharomyces pombe (strain 972 / ATCC 24843) (Fission yeast).